Consider the following 197-residue polypeptide: Holliday junction branch migration complex subunit RuvA (197 aa).

Residues 1–63 (MFEYLNGKLV…EDAHSLYGFV (63 aa)) form a domain I region. The interval 64-142 (NESEKALFLR…ATGAVGISLL (79 aa)) is domain II. Residues 142–146 (LDAAP) form a flexible linker region. Residues 147-197 (AGNLALEEAIEALQALGYKATELKKIEKKLEQEAGLTSEEYIKSALKLMMK) form a domain III region.

This sequence belongs to the RuvA family. As to quaternary structure, homotetramer. Forms an RuvA(8)-RuvB(12)-Holliday junction (HJ) complex. HJ DNA is sandwiched between 2 RuvA tetramers; dsDNA enters through RuvA and exits via RuvB. An RuvB hexamer assembles on each DNA strand where it exits the tetramer. Each RuvB hexamer is contacted by two RuvA subunits (via domain III) on 2 adjacent RuvB subunits; this complex drives branch migration. In the full resolvosome a probable DNA-RuvA(4)-RuvB(12)-RuvC(2) complex forms which resolves the HJ.

The protein localises to the cytoplasm. Its function is as follows. The RuvA-RuvB-RuvC complex processes Holliday junction (HJ) DNA during genetic recombination and DNA repair, while the RuvA-RuvB complex plays an important role in the rescue of blocked DNA replication forks via replication fork reversal (RFR). RuvA specifically binds to HJ cruciform DNA, conferring on it an open structure. The RuvB hexamer acts as an ATP-dependent pump, pulling dsDNA into and through the RuvAB complex. HJ branch migration allows RuvC to scan DNA until it finds its consensus sequence, where it cleaves and resolves the cruciform DNA. The polypeptide is Holliday junction branch migration complex subunit RuvA (Lactococcus lactis subsp. cremoris (strain SK11)).